Reading from the N-terminus, the 290-residue chain is Shikimate dehydrogenase (NADP(+)) (290 aa).

Shikimate-binding positions include 24-26 (SLS) and threonine 71. The Proton acceptor role is filled by lysine 75. Positions 96 and 111 each coordinate shikimate. NADP(+) contacts are provided by residues 136 to 140 (GAGGA), 160 to 165 (NRTVDR), and leucine 233. Tyrosine 235 is a shikimate binding site. Position 256 (glycine 256) interacts with NADP(+).

The protein belongs to the shikimate dehydrogenase family. As to quaternary structure, homodimer.

It catalyses the reaction shikimate + NADP(+) = 3-dehydroshikimate + NADPH + H(+). The protein operates within metabolic intermediate biosynthesis; chorismate biosynthesis; chorismate from D-erythrose 4-phosphate and phosphoenolpyruvate: step 4/7. In terms of biological role, involved in the biosynthesis of the chorismate, which leads to the biosynthesis of aromatic amino acids. Catalyzes the reversible NADPH linked reduction of 3-dehydroshikimate (DHSA) to yield shikimate (SA). The chain is Shikimate dehydrogenase (NADP(+)) from Methanopyrus kandleri (strain AV19 / DSM 6324 / JCM 9639 / NBRC 100938).